A 353-amino-acid chain; its full sequence is UPF0283 membrane protein YcjF (353 aa).

Residues 1 to 19 are compositionally biased toward basic and acidic residues; that stretch reads MSEPLKPRIDFAEPLKEEP. Residues 1 to 35 are disordered; it reads MSEPLKPRIDFAEPLKEEPTSAFKAQQTFSEAESR. 3 helical membrane-spanning segments follow: residues 70–90, 100–120, and 213–233; these read MVMG…VQWT, VALG…GSVV, and ESTL…FIAW.

This sequence belongs to the UPF0283 family.

The protein localises to the cell inner membrane. The protein is UPF0283 membrane protein YcjF of Salmonella dublin (strain CT_02021853).